Consider the following 303-residue polypeptide: Probable RuBisCO transcriptional regulator (303 aa).

The 58-residue stretch at 6 to 63 folds into the HTH lysR-type domain; the sequence is FTLDQLRIFQAIVVEGSFQKAAQSLYISQPAVSLQIQNLEQQLNAPLFDRSHRKAKLT. Positions 23–42 form a DNA-binding region, H-T-H motif; it reads FQKAAQSLYISQPAVSLQIQ.

This sequence belongs to the LysR transcriptional regulatory family.

It is found in the plastid. Its subcellular location is the chloroplast. Functionally, trans-acting transcriptional regulator of RuBisCO genes (rbcL and rbcS) expression. The protein is Probable RuBisCO transcriptional regulator (rbcR) of Cyanidioschyzon merolae (strain NIES-3377 / 10D) (Unicellular red alga).